Consider the following 205-residue polypeptide: Large ribosomal subunit protein bL25 (205 aa).

Residues 184–205 (QPAGAVSEAAEGGEAAGETPAA) form a disordered region. Over residues 186–205 (AGAVSEAAEGGEAAGETPAA) the composition is skewed to low complexity.

The protein belongs to the bacterial ribosomal protein bL25 family. CTC subfamily. As to quaternary structure, part of the 50S ribosomal subunit; part of the 5S rRNA/L5/L18/L25 subcomplex. Contacts the 5S rRNA. Binds to the 5S rRNA independently of L5 and L18.

This is one of the proteins that binds to the 5S RNA in the ribosome where it forms part of the central protuberance. This Cupriavidus necator (strain ATCC 17699 / DSM 428 / KCTC 22496 / NCIMB 10442 / H16 / Stanier 337) (Ralstonia eutropha) protein is Large ribosomal subunit protein bL25.